We begin with the raw amino-acid sequence, 37 residues long: Cytochrome b6-f complex subunit 5 (37 aa).

A helical membrane pass occupies residues 5–25 (LLSGIVLGLVPVTITGLFVAA).

The protein belongs to the PetG family. As to quaternary structure, the 4 large subunits of the cytochrome b6-f complex are cytochrome b6, subunit IV (17 kDa polypeptide, PetD), cytochrome f and the Rieske protein, while the 4 small subunits are PetG, PetL, PetM and PetN. The complex functions as a dimer.

It is found in the plastid. It localises to the chloroplast thylakoid membrane. Its function is as follows. Component of the cytochrome b6-f complex, which mediates electron transfer between photosystem II (PSII) and photosystem I (PSI), cyclic electron flow around PSI, and state transitions. PetG is required for either the stability or assembly of the cytochrome b6-f complex. The sequence is that of Cytochrome b6-f complex subunit 5 from Emiliania huxleyi (Coccolithophore).